The primary structure comprises 134 residues: UPF0412 protein YaaI (134 aa).

The first 23 residues, 1 to 23 (MRSVLTISVGLLFGLALSSVAHA), serve as a signal peptide directing secretion.

It belongs to the UPF0412 family.

This chain is UPF0412 protein YaaI, found in Salmonella typhimurium (strain LT2 / SGSC1412 / ATCC 700720).